Reading from the N-terminus, the 38-residue chain is Photosystem II reaction center protein L (38 aa).

Residues 17–37 (SLYWGLLLIFVLAVPFSNYFF) form a helical membrane-spanning segment.

The protein belongs to the PsbL family. In terms of assembly, PSII is composed of 1 copy each of membrane proteins PsbA, PsbB, PsbC, PsbD, PsbE, PsbF, PsbH, PsbI, PsbJ, PsbK, PsbL, PsbM, PsbT, PsbX, PsbY, PsbZ, Psb30/Ycf12, at least 3 peripheral proteins of the oxygen-evolving complex and a large number of cofactors. It forms dimeric complexes.

It localises to the plastid. It is found in the chloroplast thylakoid membrane. Functionally, one of the components of the core complex of photosystem II (PSII). PSII is a light-driven water:plastoquinone oxidoreductase that uses light energy to abstract electrons from H(2)O, generating O(2) and a proton gradient subsequently used for ATP formation. It consists of a core antenna complex that captures photons, and an electron transfer chain that converts photonic excitation into a charge separation. This subunit is found at the monomer-monomer interface and is required for correct PSII assembly and/or dimerization. This chain is Photosystem II reaction center protein L, found in Cedrus deodara (Deodar cedar).